We begin with the raw amino-acid sequence, 401 residues long: Beta-ketoadipyl-CoA thiolase (401 aa).

C91 acts as the Acyl-thioester intermediate in catalysis. Catalysis depends on proton acceptor residues H357 and C387.

This sequence belongs to the thiolase-like superfamily. Thiolase family. In terms of assembly, homotetramer.

The enzyme catalyses succinyl-CoA + acetyl-CoA = 3-oxoadipyl-CoA + CoA. Its pathway is aromatic compound metabolism; beta-ketoadipate pathway; acetyl-CoA and succinyl-CoA from 3-oxoadipate: step 2/2. Functionally, catalyzes thiolytic cleavage of beta-ketoadipyl-CoA to succinyl-CoA and acetyl-CoA. The protein is Beta-ketoadipyl-CoA thiolase (pcaF) of Pseudomonas knackmussii (strain DSM 6978 / CCUG 54928 / LMG 23759 / B13).